The primary structure comprises 114 residues: Large ribosomal subunit protein bL19 (114 aa).

It belongs to the bacterial ribosomal protein bL19 family.

This protein is located at the 30S-50S ribosomal subunit interface and may play a role in the structure and function of the aminoacyl-tRNA binding site. The protein is Large ribosomal subunit protein bL19 of Clavibacter sepedonicus (Clavibacter michiganensis subsp. sepedonicus).